The primary structure comprises 284 residues: Pheromone-regulated membrane protein 4 (284 aa).

Residues Ile-20–Trp-38 traverse the membrane as a helical segment. The Glutaredoxin domain maps to Arg-157–Asn-272.

The protein resides in the membrane. This Saccharomyces cerevisiae (strain ATCC 204508 / S288c) (Baker's yeast) protein is Pheromone-regulated membrane protein 4 (PRM4).